The primary structure comprises 307 residues: UPF0276 protein Bphyt_5128 (307 aa).

The protein belongs to the UPF0276 family.

This chain is UPF0276 protein Bphyt_5128, found in Paraburkholderia phytofirmans (strain DSM 17436 / LMG 22146 / PsJN) (Burkholderia phytofirmans).